The following is a 216-amino-acid chain: UPF0323 lipoprotein HPG27_212 (216 aa).

The first 27 residues, 1-27 (MKKPYRKISDYAIVGGLSALVMVSIVG), serve as a signal peptide directing secretion. Cys28 carries the N-palmitoyl cysteine lipid modification. The S-diacylglycerol cysteine moiety is linked to residue Cys28. Residues 159 to 170 (QRTYKSPQAYQR) are compositionally biased toward polar residues. A disordered region spans residues 159 to 216 (QRTYKSPQAYQRSQNSFSKSAPSASSMGGASKGQSGFFGSSRPTSSPAVSSGTRGFNS). A compositionally biased stretch (low complexity) spans 171-209 (SQNSFSKSAPSASSMGGASKGQSGFFGSSRPTSSPAVSS).

Belongs to the UPF0323 family.

It is found in the cell membrane. This chain is UPF0323 lipoprotein HPG27_212, found in Helicobacter pylori (strain G27).